A 482-amino-acid polypeptide reads, in one-letter code: MDDEDMSCTSGDDYAGYGDEDYYNEADVDAADDVAVTPTHSEEADYECLSVNQVERVFIDGVNSLVSRISINEKFARILLQANHWDVDKIARLVRNDRNDFLRKCHIDAKPEPKRKLSSTQSVLAKGYCSVCAMDGYTELPHLTCGHCFCEHCWKSHVESRLSEGVASRIECMESECEVYAPSEFVLSIIKNSPVIKLKYERFLLRDMVNSHPHLKFCVGNECPVIIRSTEVKPKRVTCMQCHTSFCVKCGADYHAPTSCETIKQWMTKCADDSETANYISAHTKDCPQCHSCIEKAGGCNHIQCTRCRHHFCWMCFGDWKSHGSEYYECSRYKENPSVAAEANHVKARRALEKYLHYFERFENHSKSLKMEEELRDKIRKKIDDKVNEHNGTWIDWQYLHKSVSLLTKCRYTLQYTYPFAYFLSATPRKNLFEYQQAQLEKEVEELAWAVERADGTARGALEAHMHRAEHKRQTLLHDFFF.

The TRIAD supradomain stretch occupies residues 125 to 334 (AKGYCSVCAM…SEYYECSRYK (210 aa)). 18 residues coordinate Zn(2+): C129, C132, C145, H147, C150, C153, C172, C177, C218, C223, C239, C242, C247, C250, H255, C260, C287, and C290. An RING-type 1 zinc finger spans residues 129–177 (CSVCAMDGYTELPHLTCGHCFCEHCWKSHVESRLSEGVASRIECMESEC). The IBR-type zinc-finger motif lies at 198–260 (LKYERFLLRD…GADYHAPTSC (63 aa)). An RING-type 2; atypical zinc finger spans residues 287–316 (CPQCHSCIEKAGGCNHIQCTRCRHHFCWMC). C300 is a catalytic residue. Zn(2+)-binding residues include C305, C308, C313, C316, H323, and C330. A coiled-coil region spans residues 433–459 (FEYQQAQLEKEVEELAWAVERADGTAR).

Belongs to the RBR family. Ariadne subfamily.

The protein resides in the nucleus. It carries out the reaction [E2 ubiquitin-conjugating enzyme]-S-ubiquitinyl-L-cysteine + [acceptor protein]-L-lysine = [E2 ubiquitin-conjugating enzyme]-L-cysteine + [acceptor protein]-N(6)-ubiquitinyl-L-lysine.. Might act as an E3 ubiquitin-protein ligase, or as part of E3 complex, which accepts ubiquitin from specific E2 ubiquitin-conjugating enzymes, such as UBC-2/UBE2L3, and then transfers it to substrates. This is Potential E3 ubiquitin-protein ligase ariadne-2 from Caenorhabditis elegans.